The sequence spans 342 residues: AA9 family lytic polysaccharide monooxygenase AA9-X282 (342 aa).

Residues 1-18 (MKSFASLLFLAATAAAHA) form the signal peptide. H17 lines the Cu(2+) pocket. Phosphothreonine occurs at positions 19 and 57. Residue S59 is modified to Phosphoserine. Residues C63 and C181 are joined by a disulfide bond. Position 93 (H93) interacts with Cu(2+). Residues H167 and Q176 each contribute to the O2 site. Y178 contributes to the Cu(2+) binding site. Residue N189 is glycosylated (N-linked (GlcNAc...) asparagine). The segment at 233-263 (SPATVANTPYPTTATWNTALQPTTVPTVTPP) is X282 extension. Residues 281–302 (VTSQPPVPPTTQQPPVVTPTAP) are disordered. Residues 285–302 (PPVPPTTQQPPVVTPTAP) show a composition bias toward pro residues. Residues 306–342 (PLQTQYGQCGGQGWNGPTQCQPPYTCTASNQWYHQCL) enclose the CBM1 domain.

This sequence belongs to the polysaccharide monooxygenase AA9 family. It depends on Cu(2+) as a cofactor.

It is found in the secreted. It carries out the reaction [(1-&gt;4)-beta-D-glucosyl]n+m + reduced acceptor + O2 = 4-dehydro-beta-D-glucosyl-[(1-&gt;4)-beta-D-glucosyl]n-1 + [(1-&gt;4)-beta-D-glucosyl]m + acceptor + H2O.. Its function is as follows. Lytic polysaccharide monooxygenase (LPMO) that depolymerizes crystalline and amorphous polysaccharides via the oxidation of scissile alpha- or beta-(1-4)-glycosidic bonds, yielding C1 oxidation products. Catalysis by LPMOs requires the reduction of the active-site copper from Cu(II) to Cu(I) by a reducing agent and H(2)O(2) or O(2) as a cosubstrate. Shows only weak binding properties to cellulose, and low cellulolytic oxidative activity which questions the involvement of X282 extension-containing AA9 proteins in the degradation of plant cell wall and opens new avenues as to the divergence of function of some AA9 members. The protein is AA9 family lytic polysaccharide monooxygenase AA9-X282 of Coprinopsis cinerea (strain Okayama-7 / 130 / ATCC MYA-4618 / FGSC 9003) (Inky cap fungus).